We begin with the raw amino-acid sequence, 457 residues long: Succinate-semialdehyde dehydrogenase [NADP(+)] 1 (457 aa).

NADP(+) is bound at residue 209–214; the sequence is GSEPAG. Catalysis depends on residues glutamate 231 and cysteine 265.

This sequence belongs to the aldehyde dehydrogenase family.

It carries out the reaction succinate semialdehyde + NAD(+) + H2O = succinate + NADH + 2 H(+). It catalyses the reaction succinate semialdehyde + NADP(+) + H2O = succinate + NADPH + 2 H(+). Catalyzes the NADP(+)-dependent oxidation of succinate semialdehyde to succinate. It is believed to be the main source of succinate semialdehyde dehydrogenase activity in Mycobacterium. This is Succinate-semialdehyde dehydrogenase [NADP(+)] 1 (gabD1) from Mycobacterium bovis (strain ATCC BAA-935 / AF2122/97).